Reading from the N-terminus, the 551-residue chain is MAKELRFGDDARQQMLAGVNALADRVKATMGPSGRNVVLERSFGAPTVTKDGVSVAKEIEFENRFKNMGAQMVKEVAAKTSDTAGDGTTTATVLARSIVVEGHKAVAAGMNPMDLKRGIDKAVTAITKELQKMSKPCKDGKAIAQVGTISANSDQAIGSIIAEAMEKVGKEGVITVEDGNGLENELSVVEGMQFDRGYISPYFINNQQNMSAELEHPFILLVDKKIATIRDMLSVLEAVAKSGRPLLIVAEDVEGEALATLVVNNMRGIVKVCAVKAPGFGDRRKAMLQDIAILTNGQVISEEIGTSLETASLESLGTAKRIVVTKENTTIIDGEGKATEINARIAQIRAQMEETSSDYDREKLQERVAKLAGGVAVIKVGAATEIEMKEKKARVEDALHATRAAVEEGIVAGGGVALIRAQKVLDGLKGDNADQDMGINILRRAIESPLRQIVANAGYESSVIVNKVAEHKDNFGFNAATGQYGDMVEMGILDPTKVTRTALQNAASVRSLMLTTECMVADLPKKDEGMAGAGDMGGMGGMGGMGGMGMM.

ATP-binding positions include 29-32 (TMGP), K50, 86-90 (DGTTT), G414, 478-480 (NAA), and D494.

It belongs to the chaperonin (HSP60) family. As to quaternary structure, forms a cylinder of 14 subunits composed of two heptameric rings stacked back-to-back. Interacts with the co-chaperonin GroES.

It localises to the cytoplasm. The enzyme catalyses ATP + H2O + a folded polypeptide = ADP + phosphate + an unfolded polypeptide.. Functionally, together with its co-chaperonin GroES, plays an essential role in assisting protein folding. The GroEL-GroES system forms a nano-cage that allows encapsulation of the non-native substrate proteins and provides a physical environment optimized to promote and accelerate protein folding. The chain is Chaperonin GroEL from Legionella jeonii.